A 61-amino-acid polypeptide reads, in one-letter code: UPF0391 membrane protein Ajs_0703 (61 aa).

2 helical membrane-spanning segments follow: residues 5 to 25 (AIIF…GVAA) and 33 to 53 (VLFV…LLGI).

The protein belongs to the UPF0391 family.

It localises to the cell membrane. The sequence is that of UPF0391 membrane protein Ajs_0703 from Acidovorax sp. (strain JS42).